The primary structure comprises 477 residues: Probable cytosol aminopeptidase (477 aa).

Residues Lys245 and Asp250 each coordinate Mn(2+). Lys257 is a catalytic residue. The Mn(2+) site is built by Asp268, Asp327, and Glu329. Arg331 is a catalytic residue.

It belongs to the peptidase M17 family. Requires Mn(2+) as cofactor.

It localises to the cytoplasm. It carries out the reaction Release of an N-terminal amino acid, Xaa-|-Yaa-, in which Xaa is preferably Leu, but may be other amino acids including Pro although not Arg or Lys, and Yaa may be Pro. Amino acid amides and methyl esters are also readily hydrolyzed, but rates on arylamides are exceedingly low.. The catalysed reaction is Release of an N-terminal amino acid, preferentially leucine, but not glutamic or aspartic acids.. In terms of biological role, presumably involved in the processing and regular turnover of intracellular proteins. Catalyzes the removal of unsubstituted N-terminal amino acids from various peptides. This is Probable cytosol aminopeptidase from Exiguobacterium sibiricum (strain DSM 17290 / CCUG 55495 / CIP 109462 / JCM 13490 / 255-15).